A 547-amino-acid chain; its full sequence is Puff-specific protein Bx42 (547 aa).

The SNW stretch occupies residues 177-343; the sequence is AQYIRYTPSQ…AREERAGLRN (167 aa). Phosphoserine is present on residues Ser227 and Ser235. 2 disordered regions span residues 333 to 398 and 486 to 547; these read RARE…ERDI and QFSG…SKRD. Basic and acidic residues-rich tracts occupy residues 358-398 and 526-539; these read EVRE…ERDI and KRAE…SSHS.

It belongs to the SNW family.

The protein resides in the nucleus. May play a role in chromatin structure and function. The polypeptide is Puff-specific protein Bx42 (Bx42) (Drosophila melanogaster (Fruit fly)).